We begin with the raw amino-acid sequence, 150 residues long: UPF0506 protein SJCHGC02380 (150 aa).

The N-terminal stretch at 1–18 (MNTCIQLLILCLVTVINS) is a signal peptide. N-linked (GlcNAc...) asparagine glycosylation is found at Asn-20, Asn-24, Asn-36, Asn-48, Asn-52, and Asn-110. 3 cysteine pairs are disulfide-bonded: Cys-116–Cys-130, Cys-123–Cys-134, and Cys-129–Cys-139.

Belongs to the UPF0506 family.

It localises to the secreted. This is UPF0506 protein SJCHGC02380 from Schistosoma japonicum (Blood fluke).